The primary structure comprises 263 residues: Shikimate dehydrogenase (NADP(+)) (263 aa).

Shikimate contacts are provided by residues Thr21–Ser23 and Thr67. Lys71 serves as the catalytic Proton acceptor. Glu83 contributes to the NADP(+) binding site. Asn92 and Asp103 together coordinate shikimate. NADP(+) contacts are provided by residues Gly126 to Ala130 and Leu204. Tyr206 contributes to the shikimate binding site. Residue Gly227 coordinates NADP(+).

This sequence belongs to the shikimate dehydrogenase family. Homodimer.

The enzyme catalyses shikimate + NADP(+) = 3-dehydroshikimate + NADPH + H(+). Its pathway is metabolic intermediate biosynthesis; chorismate biosynthesis; chorismate from D-erythrose 4-phosphate and phosphoenolpyruvate: step 4/7. Its function is as follows. Involved in the biosynthesis of the chorismate, which leads to the biosynthesis of aromatic amino acids. Catalyzes the reversible NADPH linked reduction of 3-dehydroshikimate (DHSA) to yield shikimate (SA). This Sulfolobus acidocaldarius (strain ATCC 33909 / DSM 639 / JCM 8929 / NBRC 15157 / NCIMB 11770) protein is Shikimate dehydrogenase (NADP(+)).